A 118-amino-acid polypeptide reads, in one-letter code: MARIAGINIPDQKHTVIALTAIFGIGRTRARAICAATAIAETAKIKELSEAQIDTLREEVAKYLVEGDLRREISMNIKRLMDLGCYRGLRHRRSLPLRGQRTKTNARTRKGPRKPIRK.

Residues 94–118 form a disordered region; it reads SLPLRGQRTKTNARTRKGPRKPIRK.

This sequence belongs to the universal ribosomal protein uS13 family. As to quaternary structure, part of the 30S ribosomal subunit. Forms a loose heterodimer with protein S19. Forms two bridges to the 50S subunit in the 70S ribosome.

Functionally, located at the top of the head of the 30S subunit, it contacts several helices of the 16S rRNA. In the 70S ribosome it contacts the 23S rRNA (bridge B1a) and protein L5 of the 50S subunit (bridge B1b), connecting the 2 subunits; these bridges are implicated in subunit movement. Contacts the tRNAs in the A and P-sites. This Shewanella sp. (strain W3-18-1) protein is Small ribosomal subunit protein uS13.